Reading from the N-terminus, the 130-residue chain is Small ribosomal subunit protein eS6 (130 aa).

The segment at 78-98 is disordered; it reads SGPPGFRPERKGERRRKTVRG.

Belongs to the eukaryotic ribosomal protein eS6 family.

The chain is Small ribosomal subunit protein eS6 from Methanopyrus kandleri (strain AV19 / DSM 6324 / JCM 9639 / NBRC 100938).